We begin with the raw amino-acid sequence, 341 residues long: Glyceraldehyde-3-phosphate dehydrogenase 3 (341 aa).

Residues 13 to 14 (RI), Asp-35, and Arg-85 contribute to the NAD(+) site. D-glyceraldehyde 3-phosphate-binding positions include 157 to 159 (SCT), Thr-188, 217 to 218 (TG), and Arg-240. Cys-158 acts as the Nucleophile in catalysis. Asn-322 provides a ligand contact to NAD(+).

Belongs to the glyceraldehyde-3-phosphate dehydrogenase family. In terms of assembly, homotetramer.

It localises to the cytoplasm. It carries out the reaction D-glyceraldehyde 3-phosphate + phosphate + NAD(+) = (2R)-3-phospho-glyceroyl phosphate + NADH + H(+). The protein operates within carbohydrate degradation; glycolysis; pyruvate from D-glyceraldehyde 3-phosphate: step 1/5. The sequence is that of Glyceraldehyde-3-phosphate dehydrogenase 3 (gpd-3) from Caenorhabditis elegans.